A 253-amino-acid chain; its full sequence is Sulfate transporter CysZ (253 aa).

4 helical membrane-spanning segments follow: residues 31–51 (FVIL…WWLF), 75–95 (LLWP…FSTI), 151–171 (IVLL…PVLW), and 222–242 (IPLL…AMWV).

Belongs to the CysZ family.

Its subcellular location is the cell inner membrane. Functionally, high affinity, high specificity proton-dependent sulfate transporter, which mediates sulfate uptake. Provides the sulfur source for the cysteine synthesis pathway. The chain is Sulfate transporter CysZ from Escherichia coli O139:H28 (strain E24377A / ETEC).